A 505-amino-acid chain; its full sequence is Aspartyl/glutamyl-tRNA(Asn/Gln) amidotransferase subunit B (505 aa).

It belongs to the GatB/GatE family. GatB subfamily. As to quaternary structure, heterotrimer of A, B and C subunits.

The catalysed reaction is L-glutamyl-tRNA(Gln) + L-glutamine + ATP + H2O = L-glutaminyl-tRNA(Gln) + L-glutamate + ADP + phosphate + H(+). It carries out the reaction L-aspartyl-tRNA(Asn) + L-glutamine + ATP + H2O = L-asparaginyl-tRNA(Asn) + L-glutamate + ADP + phosphate + 2 H(+). Its function is as follows. Allows the formation of correctly charged Asn-tRNA(Asn) or Gln-tRNA(Gln) through the transamidation of misacylated Asp-tRNA(Asn) or Glu-tRNA(Gln) in organisms which lack either or both of asparaginyl-tRNA or glutaminyl-tRNA synthetases. The reaction takes place in the presence of glutamine and ATP through an activated phospho-Asp-tRNA(Asn) or phospho-Glu-tRNA(Gln). In Kineococcus radiotolerans (strain ATCC BAA-149 / DSM 14245 / SRS30216), this protein is Aspartyl/glutamyl-tRNA(Asn/Gln) amidotransferase subunit B.